The chain runs to 219 residues: 2-phospho-L-lactate guanylyltransferase (219 aa).

It belongs to the CofC family. In terms of assembly, homodimer.

The catalysed reaction is (2S)-2-phospholactate + GTP + H(+) = (2S)-lactyl-2-diphospho-5'-guanosine + diphosphate. It participates in cofactor biosynthesis; coenzyme F420 biosynthesis. Its function is as follows. Guanylyltransferase that catalyzes the activation of (2S)-2-phospholactate (2-PL) as (2S)-lactyl-2-diphospho-5'-guanosine, via the condensation of 2-PL with GTP. It is involved in the biosynthesis of coenzyme F420, a hydride carrier cofactor. This is 2-phospho-L-lactate guanylyltransferase from Methanocella arvoryzae (strain DSM 22066 / NBRC 105507 / MRE50).